The primary structure comprises 91 residues: Small ribosomal subunit protein uS15 (91 aa).

This sequence belongs to the universal ribosomal protein uS15 family. In terms of assembly, part of the 30S ribosomal subunit. Forms a bridge to the 50S subunit in the 70S ribosome, contacting the 23S rRNA.

In terms of biological role, one of the primary rRNA binding proteins, it binds directly to 16S rRNA where it helps nucleate assembly of the platform of the 30S subunit by binding and bridging several RNA helices of the 16S rRNA. Functionally, forms an intersubunit bridge (bridge B4) with the 23S rRNA of the 50S subunit in the ribosome. The protein is Small ribosomal subunit protein uS15 of Amoebophilus asiaticus (strain 5a2).